Reading from the N-terminus, the 188-residue chain is Adenylate kinase (188 aa).

Residue 12-17 (GSGKTT) participates in ATP binding. An NMP region spans residues 33–62 (STGDLLRAEVASGSELGKKIDSFISKGNLV). Residues Thr-34, Arg-39, 60-62 (NLV), 87-90 (GYPR), and Gln-94 contribute to the AMP site. The tract at residues 129 to 135 (GRARGAD) is LID. Arg-130 provides a ligand contact to ATP. AMP contacts are provided by Arg-132 and Arg-144. Arg-172 is a binding site for ATP.

Belongs to the adenylate kinase family. In terms of assembly, monomer.

Its subcellular location is the cytoplasm. The catalysed reaction is AMP + ATP = 2 ADP. The protein operates within purine metabolism; AMP biosynthesis via salvage pathway; AMP from ADP: step 1/1. Catalyzes the reversible transfer of the terminal phosphate group between ATP and AMP. Plays an important role in cellular energy homeostasis and in adenine nucleotide metabolism. The protein is Adenylate kinase of Campylobacter curvus (strain 525.92).